Consider the following 512-residue polypeptide: V-type proton ATPase subunit B (512 aa).

ATP is bound at residue R381. The interval 484–512 (LYGRDREQDDDEDEDEEDPDKSGDKLIDA) is disordered. Positions 491 to 502 (QDDDEDEDEEDP) are enriched in acidic residues. A compositionally biased stretch (basic and acidic residues) spans 503 to 512 (DKSGDKLIDA).

It belongs to the ATPase alpha/beta chains family. V-ATPase is a heteromultimeric enzyme composed of a peripheral catalytic V1 complex (components A to H) attached to an integral membrane V0 proton pore complex (components: a, c, c', c'', d, e, f and VOA1).

The protein localises to the vacuole membrane. Non-catalytic subunit of the V1 complex of vacuolar(H+)-ATPase (V-ATPase), a multisubunit enzyme composed of a peripheral complex (V1) that hydrolyzes ATP and a membrane integral complex (V0) that translocates protons. Plays an important role in resistance to several stresses, as well as in autophagy and virulence. This Candida albicans (strain SC5314 / ATCC MYA-2876) (Yeast) protein is V-type proton ATPase subunit B.